Reading from the N-terminus, the 182-residue chain is Bifunctional protein PyrR (182 aa).

Positions 100–112 (VVLVDDVLYTGRT) match the PRPP-binding motif.

Belongs to the purine/pyrimidine phosphoribosyltransferase family. PyrR subfamily. Homodimer and homohexamer; in equilibrium.

The enzyme catalyses UMP + diphosphate = 5-phospho-alpha-D-ribose 1-diphosphate + uracil. Its function is as follows. Regulates transcriptional attenuation of the pyrimidine nucleotide (pyr) operon by binding in a uridine-dependent manner to specific sites on pyr mRNA. This disrupts an antiterminator hairpin in the RNA and favors formation of a downstream transcription terminator, leading to a reduced expression of downstream genes. Functionally, also displays a weak uracil phosphoribosyltransferase activity which is not physiologically significant. This is Bifunctional protein PyrR from Natranaerobius thermophilus (strain ATCC BAA-1301 / DSM 18059 / JW/NM-WN-LF).